Consider the following 124-residue polypeptide: MVNIGLSKVDDAIVAKHPGLQQYVACQSYAFMKGTASFILGTVGIFFGQRALQKIIKYPLQWNLFVSIVSSSVFSYSVTRWETMKCSDVWLFLETGNIPDRNSDKEEPETSADSTTTQHEDVLE.

2 consecutive transmembrane segments (helical) span residues 29–48 (YAFMKGTASFILGTVGIFFG) and 60–78 (LQWNLFVSIVSSSVFSYSV). Positions 97-124 (NIPDRNSDKEEPETSADSTTTQHEDVLE) are disordered.

This sequence belongs to the TMEM141 family.

It localises to the membrane. The polypeptide is Transmembrane protein 141 (tmem141) (Danio rerio (Zebrafish)).